Reading from the N-terminus, the 875-residue chain is Alanine--tRNA ligase (875 aa).

Zn(2+) contacts are provided by His563, His567, Cys665, and His669.

This sequence belongs to the class-II aminoacyl-tRNA synthetase family. Zn(2+) serves as cofactor.

It is found in the cytoplasm. The enzyme catalyses tRNA(Ala) + L-alanine + ATP = L-alanyl-tRNA(Ala) + AMP + diphosphate. Functionally, catalyzes the attachment of alanine to tRNA(Ala) in a two-step reaction: alanine is first activated by ATP to form Ala-AMP and then transferred to the acceptor end of tRNA(Ala). Also edits incorrectly charged Ser-tRNA(Ala) and Gly-tRNA(Ala) via its editing domain. This chain is Alanine--tRNA ligase, found in Shewanella pealeana (strain ATCC 700345 / ANG-SQ1).